We begin with the raw amino-acid sequence, 626 residues long: MAARSVRLAQLLLFTLLCGFVGLSAAKHLDLDGIHHHQHHLHSATTHHRRRLQRDSRAKDAVGGSTHQCDAVKSYFESIDIKSSGTYSEKGAICGGNCCNNATELELRDKAAGMFEQLLHHHTSSLRGVLETNAKQFQSHVLELAQISENMTHSLFSKVYTRMVPSSRMMIHQLYTEIMNHLIYTSNYTNSNGQLGRRGIGSVQSNLEEAVRHFFVQLFPVAYHQMVHLSKNNLGDLHEDYVNCLQHNFDEMHPFGDIPQQVQSNLGKSVHMSNVFMNALLQAAEVLSEADALYGEQLTDTCKLHLLKMHYCPNCNGHHSSSRSETKLCYGYCKNVMRGCSAEYAGLLDSPWSGVVDSLNNLVTTHILSDTGIINVIKHLQTYFSEAIMAAMHNGPELEKKVKKTCGTPSLTPYSSGEPDARPPPHKNNVKWATDPDPGMVLFLSTIDKSKEFYTTIVDNFCDEQQHSRDDHSCWSGDRFGDYTQLLINPGTDSQRYNPEVPFNAKAQTGKLNELVDKLFKIRKSIGAAAPSNSIQATHDIQNDMGEGSGGGEGQIGDDEEEYGGAHGSGDGSGDGPHTPIEESEGTTTNEVESRDSGKTSGSNPLEGTATWMLLTLVTMLFSSCS.

An N-terminal signal peptide occupies residues 1-26 (MAARSVRLAQLLLFTLLCGFVGLSAA). The segment covering 41-52 (LHSATTHHRRRL) has biased composition (basic residues). The segment at 41-65 (LHSATTHHRRRLQRDSRAKDAVGGS) is disordered. Asparagine 97 is a glycosylation site (N-linked (GlcNAc...) asparagine; atypical). N-linked (GlcNAc...) asparagine glycans are attached at residues asparagine 101, asparagine 150, and asparagine 187. The interval 533–607 (NSIQATHDIQ…GKTSGSNPLE (75 aa)) is disordered. Residues serine 549, serine 569, serine 573, and serine 601 are each glycosylated (O-linked (Xyl...) (heparan sulfate) serine). A compositionally biased stretch (gly residues) spans 565–575 (GAHGSGDGSGD). The GPI-anchor amidated glycine moiety is linked to residue glycine 602. The propeptide at 603 to 626 (SNPLEGTATWMLLTLVTMLFSSCS) is removed in mature form.

This sequence belongs to the glypican family. In terms of assembly, interacts with nord; the interaction promotes dally degradation. Interacts with Magu. As part of the dally/ Magu complex, associates with fwe (isoforms ubi, LoseA and LoseB) and is unable to interact with fwe independently of Magu.

Its subcellular location is the cell membrane. Its function is as follows. Cell surface proteoglycan that bears heparan sulfate. Functions as a coreceptor for growth factors and morphogens, such as the products of dpp, to regulate signaling and distribution of these ligands. Required for cell division patterning during postembryonic development of the nervous system. Plays a role in dpp/BMP signaling possibly by stabilizing dpp and thereby creating a morphological gradient during wing development. Might have a role in testis development. Functions with magu and fwe in a mechanism of scaling, which utilises apoptosis to ensure that the dpp patterning gradient remains proportional to the size of the growing wing. In this mechanism, fwe represses dally and Magu-dependent activity in expanding the gradient, and dally/Magu inhibits fwe-dependent apoptosis to keep cell death rate low. When the levels of these different proteins are optimally regulated the gradient correctly scales with organ growth but when this fails, fwe-mediated apoptosis is activated to trim the developing tissue to match the correct size of the gradient. This Drosophila melanogaster (Fruit fly) protein is Division abnormally delayed protein (dally).